A 701-amino-acid chain; its full sequence is Sodium/hydrogen exchanger 6 (701 aa).

2 helical membrane-spanning segments follow: residues 71-91 (SANLLIFILLLTLTILTIWLF) and 103-123 (GLAMIYGLLVGLVLRYGIHVP). N128 is a glycosylation site (N-linked (GlcNAc...) asparagine). A run of 8 helical transmembrane segments spans residues 176–196 (VTFDPEVFFNILLPPIIFYAG), 211–231 (ILAYAFLGTAISCFVIGSIMY), 252–272 (CLLFGAIVSATDPVTVLAIFH), 278–298 (VELYALLFGESVLNDAVAIVL), 324–344 (IGIFLGIFSGSFAMGAATGVV), 372–392 (TFLLAEAWGFTGVVAVLFCGI), 414–434 (FELLNFLAENFIFSYMGLTLF), and 436–456 (FQNHVFNPTFVVGAFVAIFLG). K475 participates in a covalent cross-link: Glycyl lysine isopeptide (Lys-Gly) (interchain with G-Cter in ubiquitin). Helical transmembrane passes span 479 to 499 (NFQHMMMFAGLRGAMAFALAI) and 515 to 535 (LLIVFFTVWVFGGGTTAMLSC).

This sequence belongs to the monovalent cation:proton antiporter 1 (CPA1) transporter (TC 2.A.36) family. Homodimer. Interacts with RACK1; regulates the distribution of SLC9A6 between endosomes and the plasma membrane. Post-translationally, ubiquitinated (in vitro). Glycosylated. As to expression, ubiquitous. High expression in brain, skeletal muscle, and heart, but is also detected at lower levels in most other tissues.

It localises to the endosome membrane. The protein localises to the recycling endosome membrane. The protein resides in the early endosome membrane. It is found in the late endosome membrane. Its subcellular location is the cell membrane. It catalyses the reaction Na(+)(in) + H(+)(out) = Na(+)(out) + H(+)(in). It carries out the reaction K(+)(in) + H(+)(out) = K(+)(out) + H(+)(in). In terms of biological role, endosomal Na(+), K(+)/H(+) antiporter. Mediates the electroneutral exchange of endosomal luminal H(+) for a cytosolic Na(+) or K(+). By facilitating proton efflux, SLC9A6 counteracts the acidity generated by vacuolar (V)-ATPase, thereby limiting luminal acidification. Responsible for alkalizing and maintaining the endosomal pH, and consequently in, e.g., endosome maturation and trafficking of recycling endosomal cargo. Plays a critical role during neurodevelopment by regulating synaptic development and plasticity. Implicated in the maintenance of cell polarity in a manner that is dependent on its ability to modulate intravesicular pH. Regulates intracelular pH in some specialized cells, osteoclasts and stereocilia where this transporter localizes to the plasma membrane. The protein is Sodium/hydrogen exchanger 6 of Homo sapiens (Human).